A 968-amino-acid polypeptide reads, in one-letter code: Catenin delta-1 (968 aa).

Position 1 is an N-acetylmethionine (Met1). The segment at 1–357 (MDDSEVESTA…ASLDSLRKGG (357 aa)) is necessary and sufficient for interaction with CCDC85B. A Phosphoserine modification is found at Ser4. A coiled-coil region spans residues 10–46 (ASILASVKEQEAQFEKLTRALEEERRHVSAQLERVRV). Residue Ser47 is modified to Phosphoserine. Thr59 carries the phosphothreonine modification. Tyr112 carries the phosphotyrosine; by FYN modification. Ser125 bears the Phosphoserine mark. 2 positions are modified to phosphotyrosine: Tyr217 and Tyr221. Ser225 is modified (phosphoserine). Tyr228 carries the post-translational modification Phosphotyrosine. Phosphoserine occurs at positions 230 and 252. Phosphotyrosine is present on Tyr257. Residues Ser268 and Ser269 each carry the phosphoserine modification. Position 280 is a phosphotyrosine (Tyr280). Residue Ser288 is modified to Phosphoserine; by PAK5. Phosphotyrosine is present on Tyr291. The Nuclear localization signal (NLS) signature appears at 299–306 (MSDYGTAR). The residue at position 300 (Ser300) is a Phosphoserine. Thr304 bears the Phosphothreonine mark. Phosphoserine occurs at positions 320, 346, 349, and 352. 4 ARM repeats span residues 358 to 395 (PPPP…HLCY), 398 to 437 (DKVK…NISF), 441 to 475 (QDNK…ITGT), and 476 to 516 (LWNL…NEDC). Lys421 participates in a covalent cross-link: Glycyl lysine isopeptide (Lys-Gly) (interchain with G-Cter in SUMO2). A Glycyl lysine isopeptide (Lys-Gly) (interchain with G-Cter in SUMO2) cross-link involves residue Lys517. A Nuclear localization signal (NLS) motif is present at residues 521–528 (IEWESVLT). ARM repeat units lie at residues 534-573 (LRNV…DSDS), 583-624 (LRNL…AKKG), 653-693 (ARGY…NLCA), 700-739 (RYIR…NLAV), 740-780 (DARN…SILN), and 781-826 (TINE…ALVL). 4 positions are modified to phosphothreonine: Ile566, Asp572, Ser587, and Glu593. The Nuclear localization signal (NLS) signature appears at 568 to 575 (QKDSDSKL). Phosphoserine is present on Ser617. Residues 622–629 (KKGKDEWF) carry the Nuclear localization signal (NLS) motif. Ser713 carries the post-translational modification Phosphoserine. 3 positions are modified to phosphothreonine: Glu788, Lys794, and Asn809. Position 811 is a phosphoserine (Ser811). Phosphothreonine occurs at positions 815, 835, and 841. Ser847 bears the Phosphoserine mark. The interval 855 to 944 (NASRSQSSHS…LMQDEGQESL (90 aa)) is disordered. A Phosphothreonine modification is found at Ala856. Residues Ser857, Ser859, and Ser861 each carry the phosphoserine modification. At Ser862 the chain carries Phosphothreonine. Ser864 carries the phosphoserine modification. Tyr865 is modified (phosphotyrosine). Ser868 bears the Phosphoserine mark. Thr869 is subject to Phosphothreonine. Basic and acidic residues predominate over residues 875–888 (RNQKSDKKPDREEI). Residue Ser879 is modified to Phosphoserine. A Glycyl lysine isopeptide (Lys-Gly) (interchain with G-Cter in SUMO2) cross-link involves residue Lys882. Phosphothreonine is present on residues Gln889 and Ser895. Polar residues predominate over residues 889–908 (QMSNMGSNTKSLDNNYSTPN). At Ser899 the chain carries Phosphoserine. Residue Tyr904 is modified to Phosphotyrosine. Thr906, Arg910, and Thr916 each carry phosphothreonine. Positions 909-922 (ERGDHNRTLDRSGD) are enriched in basic and acidic residues. Residues Ser920 and Ser943 each carry the phosphoserine modification.

It belongs to the beta-catenin family. As to quaternary structure, belongs to a multiprotein cell-cell adhesion complex that also contains E-cadherin/CDH1, alpha-catenin/CTNNA1, beta-catenin/CTNNB1, and gamma-catenin/JUP. Component of a cadherin:catenin adhesion complex composed of at least of CDH26, beta-catenin/CTNNB1, alpha-catenin/CTNNA1 and p120 catenin/CTNND1. Binds to the C-terminal fragment of PSEN1 and mutually competes for CDH1. Interacts with ZBTB33. Interacts with GLIS2. Interacts with FER. Interacts with NANOS1 (via N-terminal region). Interacts (via N-terminus) with GNA12; the interaction regulates CDH1-mediated cell-cell adhesion. Interacts with GNA13. Interacts with CCDC85B. Interacts with PLPP3; negatively regulates the PLPP3-mediated stabilization of CTNNB1. Interacts with DSG3; the interaction facilitates DSG3 localization and retention at cell-cell junctions. Interacts with CTNND1/p120-catenin; the interaction controls CADH5 endocytosis. Post-translationally, phosphorylated by FER and other protein-tyrosine kinases. Phosphorylated at Ser-288 by PAK5. Dephosphorylated by PTPRJ. In terms of tissue distribution, expressed in vascular endothelium. Melanocytes and melanoma cells primarily express the long isoform 1A, whereas keratinocytes express shorter isoforms, especially 3A. The shortest isoform 4A, is detected in normal keratinocytes and melanocytes, and generally lost from cells derived from squamous cell carcinomas or melanomas. The C-terminal alternatively spliced exon B is present in the p120ctn transcripts in the colon, intestine and prostate, but lost in several tumor tissues derived from these organs.

Its subcellular location is the cell junction. It is found in the adherens junction. The protein localises to the cytoplasm. The protein resides in the nucleus. It localises to the cell membrane. Its function is as follows. Key regulator of cell-cell adhesion that associates with and regulates the cell adhesion properties of both C-, E- and N-cadherins, being critical for their surface stability. Promotes localization and retention of DSG3 at cell-cell junctions, via its interaction with DSG3. Beside cell-cell adhesion, regulates gene transcription through several transcription factors including ZBTB33/Kaiso2 and GLIS2, and the activity of Rho family GTPases and downstream cytoskeletal dynamics. Implicated both in cell transformation by SRC and in ligand-induced receptor signaling through the EGF, PDGF, CSF-1 and ERBB2 receptors. This is Catenin delta-1 from Homo sapiens (Human).